A 178-amino-acid chain; its full sequence is UPF0098 protein PYRAB11530 (178 aa).

The signal sequence occupies residues 1-22 (MRYLVPLLVFMVLGMGCLGGGG).

The protein belongs to the UPF0098 family.

The chain is UPF0098 protein PYRAB11530 from Pyrococcus abyssi (strain GE5 / Orsay).